The following is a 1256-amino-acid chain: Topoisomerase 1-associated factor 1 (1256 aa).

Residues 26-38 (GFIVSDEENDNLE) show a composition bias toward acidic residues. 4 disordered regions span residues 26–58 (GFIVSDEENDNLENENRNERDPDSRNQDDVDEY), 695–725 (SKKKANKESNDQSDAVEQVDESDTEDKRTHA), 1052–1121 (SGAE…EAFF), and 1176–1256 (SDGV…DEDE). Positions 39–53 (NENRNERDPDSRNQD) are enriched in basic and acidic residues. Positions 1060–1086 (GKARKRGNKSSSTIKKKSLQSRSRRPP) are enriched in basic residues. 2 stretches are compositionally biased toward basic and acidic residues: residues 1097-1110 (ELRKEVKSSEFVHD) and 1179-1190 (VDTHSHQDDKSQ). The segment covering 1194 to 1204 (SENEDSSEEVS) has biased composition (acidic residues). Low complexity predominate over residues 1222 to 1231 (DNNVSENYVS).

It belongs to the timeless family. In terms of assembly, component of the fork protection complex (FPC) consisting of TOF1 and CSM3.

The protein localises to the nucleus. Functionally, forms a fork protection complex (FPC) with CSM3 and which is required for chromosome segregation during meiosis and DNA damage repair. FPC coordinates leading and lagging strand synthesis and moves with the replication fork. FPC stabilizes replication forks in a configuration that is recognized by replication checkpoint sensors. The sequence is that of Topoisomerase 1-associated factor 1 (TOF1) from Scheffersomyces stipitis (strain ATCC 58785 / CBS 6054 / NBRC 10063 / NRRL Y-11545) (Yeast).